We begin with the raw amino-acid sequence, 925 residues long: Serine/threonine-protein phosphatase 1 regulatory subunit 10 (925 aa).

The tract at residues methionine 1 to aspartate 348 is interaction with TOX4. In terms of domain architecture, TFIIS N-terminal spans lysine 73 to glutamine 147. Positions glutamine 147–threonine 211 are disordered. 2 stretches are compositionally biased toward basic and acidic residues: residues alanine 153–serine 166 and proline 174–lysine 196. Residues lysine 179 and lysine 262 each participate in a glycyl lysine isopeptide (Lys-Gly) (interchain with G-Cter in SUMO2) cross-link. Disordered regions lie at residues lysine 304 to threonine 398, threonine 536 to proline 555, and serine 587 to aspartate 890. Serine 313 carries the post-translational modification Phosphoserine. Residues lysine 325–serine 336 are compositionally biased toward low complexity. Residues proline 357 to alanine 433 are necessary for interaction with PPP1CA. Serine 382 bears the Phosphoserine mark. The tract at residues glycine 393 to arginine 408 is necessary for interaction with PPP1CC. The PP1-binding motif signature appears at arginine 394–valine 423. Threonine 398 carries the phosphothreonine; by PKA modification. The segment at threonine 418–leucine 619 is interaction with WDR82. Gly residues predominate over residues glycine 540–glycine 551. Residues serine 545 and serine 591 each carry the phosphoserine modification. Positions proline 596 to lysine 611 are enriched in basic and acidic residues. Pro residues predominate over residues proline 644–histidine 655. A compositionally biased stretch (gly residues) spans glycine 656–valine 665. Arginine 668 is modified (omega-N-methylarginine). Positions glycine 679 to glycine 693 are enriched in low complexity. 2 positions are modified to omega-N-methylarginine: arginine 696 and arginine 741. Gly residues-rich tracts occupy residues alanine 728–serine 766 and glycine 775–glycine 829. Basic and acidic residues-rich tracts occupy residues proline 846–proline 871 and arginine 879–aspartate 890. The C3H1-type zinc-finger motif lies at methionine 891–valine 919.

Component of the PNUTS-PP1 complex (also named PTW/PP1 complex), composed of PPP1R10/PNUTS, TOX4, WDR82, and PPP1CA (or PPP1CB or PPP1CC). Phosphorylated on Ser-398 by PKA within the region necessary for interaction with PPP1CA.

Its subcellular location is the nucleus. The protein localises to the chromosome. Functionally, substrate-recognition component of the PNUTS-PP1 protein phosphatase complex, a protein phosphatase 1 (PP1) complex that promotes RNA polymerase II transcription pause-release, allowing transcription elongation. Promoter-proximal pausing by RNA polymerase II is a transcription halt following transcription initiation but prior to elongation, which acts as a checkpoint to control that transcripts are favorably configured for transcriptional elongation. The PNUTS-PP1 complex mediates the release of RNA polymerase II from promoter-proximal region of genes by catalyzing dephosphorylation of proteins involved in transcription, such as AFF4, CDK9, MEPCE, INTS12, NCBP1, POLR2M/GDOWN1 and SUPT6H. The PNUTS-PP1 complex also regulates RNA polymerase II transcription termination by mediating dephosphorylation of SUPT5H in termination zones downstream of poly(A) sites, thereby promoting deceleration of RNA polymerase II transcription. PNUTS-PP1 complex is also involved in the response to replication stress by mediating dephosphorylation of POLR2A at 'Ser-5' of the CTD, promoting RNA polymerase II degradation. The PNUTS-PP1 complex also plays a role in the control of chromatin structure and cell cycle progression during the transition from mitosis into interphase. PNUTS-PP1 complex mediates dephosphorylation of MYC, promoting MYC stability by preventing MYC ubiquitination by the SCF(FBXW7) complex. In addition to acts as a substrate-recognition component, PPP1R10/PNUTS also acts as a nuclear targeting subunit for the PNUTS-PP1 complex. In some context, PPP1R10/PNUTS also acts as an inhibitor of protein phosphatase 1 (PP1) activity by preventing access to substrates, such as RB. This chain is Serine/threonine-protein phosphatase 1 regulatory subunit 10 (PPP1R10), found in Sus scrofa (Pig).